The chain runs to 401 residues: Carbamoyl phosphate synthase small chain (401 aa).

The CPSase stretch occupies residues 1 to 203 (MTATPAWTIQ…EGYSTLGETD (203 aa)). L-glutamine contacts are provided by S56, G255, and G257. Positions 207-395 (HVVALDYGVK…LNLIREKKGE (189 aa)) constitute a Glutamine amidotransferase type-1 domain. The Nucleophile role is filled by C284. L-glutamine is bound by residues L285, Q288, N326, G328, and F329. Catalysis depends on residues H368 and E370.

The protein belongs to the CarA family. Composed of two chains; the small (or glutamine) chain promotes the hydrolysis of glutamine to ammonia, which is used by the large (or ammonia) chain to synthesize carbamoyl phosphate. Tetramer of heterodimers (alpha,beta)4.

It catalyses the reaction hydrogencarbonate + L-glutamine + 2 ATP + H2O = carbamoyl phosphate + L-glutamate + 2 ADP + phosphate + 2 H(+). It carries out the reaction L-glutamine + H2O = L-glutamate + NH4(+). Its pathway is amino-acid biosynthesis; L-arginine biosynthesis; carbamoyl phosphate from bicarbonate: step 1/1. It participates in pyrimidine metabolism; UMP biosynthesis via de novo pathway; (S)-dihydroorotate from bicarbonate: step 1/3. Small subunit of the glutamine-dependent carbamoyl phosphate synthetase (CPSase). CPSase catalyzes the formation of carbamoyl phosphate from the ammonia moiety of glutamine, carbonate, and phosphate donated by ATP, constituting the first step of 2 biosynthetic pathways, one leading to arginine and/or urea and the other to pyrimidine nucleotides. The small subunit (glutamine amidotransferase) binds and cleaves glutamine to supply the large subunit with the substrate ammonia. The sequence is that of Carbamoyl phosphate synthase small chain from Rhizobium meliloti (strain 1021) (Ensifer meliloti).